Here is a 360-residue protein sequence, read N- to C-terminus: Nucleoporin SEH1 (360 aa).

6 WD repeats span residues Asp10 to Cys49, Thr55 to Lys96, Asp111 to Gln152, Ser160 to Ala210, Thr217 to Thr258, and Asn276 to Cys315. A Glycyl lysine isopeptide (Lys-Gly) (interchain with G-Cter in SUMO2) cross-link involves residue Lys12. Residues Ser179 and Ser190 each carry the phosphoserine modification. The segment covering Ser324 to Ser354 has biased composition (polar residues). The interval Ser324 to Ser360 is disordered.

It belongs to the WD repeat SEC13 family. In terms of assembly, component of the Nup107-160 subcomplex of the nuclear pore complex (NPC). The Nup107-160 subcomplex includes NUP160, NUP133, NUP107, NUP98, NUP85, NUP43, NUP37, SEH1 and SEC13. The SEH1 subunit appears to be only weakly associated with the Nup107-160 subcomplex. Component of the GATOR2 subcomplex, composed of MIOS, SEC13, SEH1L, WDR24 and WDR59. The GATOR2 complex interacts with CASTOR1 and CASTOR2; the interaction is negatively regulated by arginine. The GATOR2 complex interacts with SESN1, SESN2 and SESN3; the interaction is negatively regulated by amino acids. SESN1, SESN2 and SESN3 convey leucine availability via direct interaction with SEH1L and WDR24.

The protein resides in the chromosome. The protein localises to the centromere. Its subcellular location is the kinetochore. It localises to the nucleus. It is found in the nuclear pore complex. The protein resides in the lysosome membrane. With respect to regulation, the GATOR2 complex is negatively regulated by the upstream amino acid sensors CASTOR1 and SESN2, which sequester the GATOR2 complex in absence of amino acids. In the presence of abundant amino acids, GATOR2 is released from CASTOR1 and SESN2 and activated. Component of the Nup107-160 subcomplex of the nuclear pore complex (NPC). The Nup107-160 subcomplex is required for the assembly of a functional NPC. The Nup107-160 subcomplex is also required for normal kinetochore microtubule attachment, mitotic progression and chromosome segregation. This subunit plays a role in recruitment of the Nup107-160 subcomplex to the kinetochore. Its function is as follows. As a component of the GATOR2 complex, functions as an activator of the amino acid-sensing branch of the mTORC1 signaling pathway. The GATOR2 complex indirectly activates mTORC1 through the inhibition of the GATOR1 subcomplex. GATOR2 probably acts as an E3 ubiquitin-protein ligase toward GATOR1. In the presence of abundant amino acids, the GATOR2 complex mediates ubiquitination of the NPRL2 core component of the GATOR1 complex, leading to GATOR1 inactivation. In the absence of amino acids, GATOR2 is inhibited, activating the GATOR1 complex. Within the GATOR2 complex, SEC13 and SEH1L are required to stabilize the complex. This Pongo abelii (Sumatran orangutan) protein is Nucleoporin SEH1 (SEH1L).